The sequence spans 183 residues: GMP synthase [glutamine-hydrolyzing] subunit A (183 aa).

Positions 3-183 constitute a Glutamine amidotransferase type-1 domain; that stretch reads HILVVDNHGQ…VFENFVAICE (181 aa). Catalysis depends on Cys74, which acts as the Nucleophile. Active-site residues include His162 and Glu164.

Heterodimer composed of a glutamine amidotransferase subunit (A) and a GMP-binding subunit (B).

The enzyme catalyses XMP + L-glutamine + ATP + H2O = GMP + L-glutamate + AMP + diphosphate + 2 H(+). It functions in the pathway purine metabolism; GMP biosynthesis; GMP from XMP (L-Gln route): step 1/1. In terms of biological role, catalyzes the synthesis of GMP from XMP. The protein is GMP synthase [glutamine-hydrolyzing] subunit A of Halobacterium salinarum (strain ATCC 700922 / JCM 11081 / NRC-1) (Halobacterium halobium).